A 280-amino-acid polypeptide reads, in one-letter code: Ataxin-3 homolog (280 aa).

The 181-residue stretch at Gly-7–Glu-187 folds into the Josephin domain. Catalysis depends on Cys-20, which acts as the Nucleophile. His-126 (proton acceptor) is an active-site residue. Residue Asp-141 is part of the active site. Composition is skewed to polar residues over residues Ser-183–Gln-194 and Asp-221–Leu-232. Positions Ser-183–Phe-240 are disordered. Positions Met-243–Ala-262 constitute a UIM domain.

The protein resides in the nucleus. The catalysed reaction is Thiol-dependent hydrolysis of ester, thioester, amide, peptide and isopeptide bonds formed by the C-terminal Gly of ubiquitin (a 76-residue protein attached to proteins as an intracellular targeting signal).. Functionally, interacts with key regulators of transcription and represses transcription. Acts as a histone-binding protein that regulates transcription. Acts as a deubiquitinating enzyme. This Arabidopsis thaliana (Mouse-ear cress) protein is Ataxin-3 homolog.